Consider the following 219-residue polypeptide: 7-cyano-7-deazaguanine synthase (219 aa).

10 to 20 (FSGGQDSTTCL) is an ATP binding site. Zn(2+) is bound by residues cysteine 188, cysteine 196, cysteine 199, and cysteine 202.

Belongs to the QueC family. The cofactor is Zn(2+).

The enzyme catalyses 7-carboxy-7-deazaguanine + NH4(+) + ATP = 7-cyano-7-deazaguanine + ADP + phosphate + H2O + H(+). It participates in purine metabolism; 7-cyano-7-deazaguanine biosynthesis. Its function is as follows. Catalyzes the ATP-dependent conversion of 7-carboxy-7-deazaguanine (CDG) to 7-cyano-7-deazaguanine (preQ(0)). The sequence is that of 7-cyano-7-deazaguanine synthase from Neisseria meningitidis serogroup A / serotype 4A (strain DSM 15465 / Z2491).